A 53-amino-acid polypeptide reads, in one-letter code: uncharacterized protein (53 aa).

Residues 28-45 traverse the membrane as a helical segment; the sequence is AIVFSLAVFGIVEAYYYW.

The protein resides in the host membrane. This is an uncharacterized protein from Acidianus convivator (ABV).